A 94-amino-acid chain; its full sequence is Co-chaperonin GroES (94 aa).

It belongs to the GroES chaperonin family. Heptamer of 7 subunits arranged in a ring. Interacts with the chaperonin GroEL.

It is found in the cytoplasm. In terms of biological role, together with the chaperonin GroEL, plays an essential role in assisting protein folding. The GroEL-GroES system forms a nano-cage that allows encapsulation of the non-native substrate proteins and provides a physical environment optimized to promote and accelerate protein folding. GroES binds to the apical surface of the GroEL ring, thereby capping the opening of the GroEL channel. In Desulfitobacterium hafniense (strain DSM 10664 / DCB-2), this protein is Co-chaperonin GroES.